The primary structure comprises 244 residues: 5-oxoprolinase subunit A (244 aa).

Belongs to the LamB/PxpA family. Forms a complex composed of PxpA, PxpB and PxpC.

The catalysed reaction is 5-oxo-L-proline + ATP + 2 H2O = L-glutamate + ADP + phosphate + H(+). Functionally, catalyzes the cleavage of 5-oxoproline to form L-glutamate coupled to the hydrolysis of ATP to ADP and inorganic phosphate. The chain is 5-oxoprolinase subunit A from Escherichia coli O17:K52:H18 (strain UMN026 / ExPEC).